Here is a 1290-residue protein sequence, read N- to C-terminus: Vacuolating cytotoxin autotransporter (1290 aa).

The first 33 residues, 1 to 33 (MEIQQTHRKINRPLVSLALVGALVSITPQQSHA), serve as a signal peptide directing secretion. Positions 326 to 374 (PPEGGYKDKPKDKPSNTTQNNANNNQQNSAQNNSNTQVINPPNSAQKTE) are disordered. Basic and acidic residues predominate over residues 330–339 (GYKDKPKDKP). Residues 340 to 362 (SNTTQNNANNNQQNSAQNNSNTQ) show a composition bias toward low complexity. Over residues 363–374 (VINPPNSAQKTE) the composition is skewed to polar residues. The region spanning 1018–1290 (KYEKPTNVWA…ASNLGMRYSF (273 aa)) is the Autotransporter domain.

It localises to the periplasm. Its subcellular location is the secreted. The protein localises to the cell surface. It is found in the cell outer membrane. In terms of biological role, induces vacuolation of eukaryotic cells. Causes ulceration and gastric lesions. The sequence is that of Vacuolating cytotoxin autotransporter (vacA) from Helicobacter pylori (strain ATCC 700392 / 26695) (Campylobacter pylori).